Reading from the N-terminus, the 184-residue chain is Type-1 fimbrial protein, A chain (184 aa).

Residues methionine 1 to alanine 23 form the signal peptide. Cysteine 46 and cysteine 86 are joined by a disulfide.

It belongs to the fimbrial protein family.

It is found in the fimbrium. Its function is as follows. Fimbriae (also called pili), polar filaments radiating from the surface of the bacterium to a length of 0.5-1.5 micrometers and numbering 100-300 per cell, enable bacteria to colonize the epithelium of specific host organs. This is Type-1 fimbrial protein, A chain from Escherichia coli.